We begin with the raw amino-acid sequence, 598 residues long: Elongation factor 4 (598 aa).

Positions 2–184 (KNIRNFSIIA…RLVKEIPAPE (183 aa)) constitute a tr-type G domain. GTP contacts are provided by residues 14 to 19 (DHGKST) and 131 to 134 (NKID).

Belongs to the TRAFAC class translation factor GTPase superfamily. Classic translation factor GTPase family. LepA subfamily.

The protein localises to the cell inner membrane. The enzyme catalyses GTP + H2O = GDP + phosphate + H(+). Required for accurate and efficient protein synthesis under certain stress conditions. May act as a fidelity factor of the translation reaction, by catalyzing a one-codon backward translocation of tRNAs on improperly translocated ribosomes. Back-translocation proceeds from a post-translocation (POST) complex to a pre-translocation (PRE) complex, thus giving elongation factor G a second chance to translocate the tRNAs correctly. Binds to ribosomes in a GTP-dependent manner. The chain is Elongation factor 4 from Proteus mirabilis (strain HI4320).